A 255-amino-acid polypeptide reads, in one-letter code: Type III pantothenate kinase (255 aa).

Aspartate 6–valine 13 contributes to the ATP binding site. A substrate-binding site is contributed by glycine 107–cysteine 110. Aspartate 109 serves as the catalytic Proton acceptor. A K(+)-binding site is contributed by aspartate 129. Threonine 132 contacts ATP. Threonine 184 lines the substrate pocket.

Belongs to the type III pantothenate kinase family. As to quaternary structure, homodimer. It depends on NH4(+) as a cofactor. K(+) is required as a cofactor.

It is found in the cytoplasm. The enzyme catalyses (R)-pantothenate + ATP = (R)-4'-phosphopantothenate + ADP + H(+). Its pathway is cofactor biosynthesis; coenzyme A biosynthesis; CoA from (R)-pantothenate: step 1/5. Catalyzes the phosphorylation of pantothenate (Pan), the first step in CoA biosynthesis. This Bifidobacterium longum subsp. infantis (strain ATCC 15697 / DSM 20088 / JCM 1222 / NCTC 11817 / S12) protein is Type III pantothenate kinase.